The primary structure comprises 202 residues: Peptidyl-tRNA hydrolase (202 aa).

Residue Tyr-19 participates in tRNA binding. The Proton acceptor role is filled by His-24. Residues Tyr-70, Asn-72, and Asn-118 each contribute to the tRNA site.

It belongs to the PTH family. In terms of assembly, monomer.

The protein localises to the cytoplasm. The catalysed reaction is an N-acyl-L-alpha-aminoacyl-tRNA + H2O = an N-acyl-L-amino acid + a tRNA + H(+). In terms of biological role, hydrolyzes ribosome-free peptidyl-tRNAs (with 1 or more amino acids incorporated), which drop off the ribosome during protein synthesis, or as a result of ribosome stalling. Functionally, catalyzes the release of premature peptidyl moieties from peptidyl-tRNA molecules trapped in stalled 50S ribosomal subunits, and thus maintains levels of free tRNAs and 50S ribosomes. In Prochlorococcus marinus (strain NATL2A), this protein is Peptidyl-tRNA hydrolase.